The sequence spans 270 residues: 3-methyl-2-oxobutanoate hydroxymethyltransferase (270 aa).

Mg(2+) contacts are provided by Asp50 and Asp89. Residues 50–51, Asp89, and Lys118 contribute to the 3-methyl-2-oxobutanoate site; that span reads DS. Residue Glu120 coordinates Mg(2+). Glu187 serves as the catalytic Proton acceptor.

Belongs to the PanB family. As to quaternary structure, homodecamer; pentamer of dimers. Mg(2+) serves as cofactor.

The protein localises to the cytoplasm. It catalyses the reaction 3-methyl-2-oxobutanoate + (6R)-5,10-methylene-5,6,7,8-tetrahydrofolate + H2O = 2-dehydropantoate + (6S)-5,6,7,8-tetrahydrofolate. Its pathway is cofactor biosynthesis; (R)-pantothenate biosynthesis; (R)-pantoate from 3-methyl-2-oxobutanoate: step 1/2. Its function is as follows. Catalyzes the reversible reaction in which hydroxymethyl group from 5,10-methylenetetrahydrofolate is transferred onto alpha-ketoisovalerate to form ketopantoate. This chain is 3-methyl-2-oxobutanoate hydroxymethyltransferase, found in Helicobacter pylori (strain Shi470).